Reading from the N-terminus, the 217-residue chain is Dual specificity phosphatase 29 (217 aa).

The Tyrosine-protein phosphatase domain occupies 46–194 (HVNEVWPNLY…LRELDIKLAL (149 aa)). A substrate-binding site is contributed by 138 to 145 (HCAMGRSR). Cys-139 acts as the Phosphocysteine intermediate in catalysis.

This sequence belongs to the protein-tyrosine phosphatase family. Non-receptor class dual specificity subfamily.

It localises to the cytoplasm. Its subcellular location is the nucleus. It catalyses the reaction O-phospho-L-tyrosyl-[protein] + H2O = L-tyrosyl-[protein] + phosphate. The enzyme catalyses O-phospho-L-seryl-[protein] + H2O = L-seryl-[protein] + phosphate. The catalysed reaction is O-phospho-L-threonyl-[protein] + H2O = L-threonyl-[protein] + phosphate. Its function is as follows. Dual specificity phosphatase able to dephosphorylate phosphotyrosine, phosphoserine and phosphothreonine residues within the same substrate, with a preference for phosphotyrosine as a substrate. Involved in the modulation of AMPK and MAPK1/2 signaling pathways. The polypeptide is Dual specificity phosphatase 29 (DUSP29) (Anolis carolinensis (Green anole)).